An 807-amino-acid polypeptide reads, in one-letter code: Ecotropic viral integration site 5 ortholog (807 aa).

A disordered region spans residues 1–31 (MTLTTTTTASSAESQAKMDVKGGALPGEENL). A Phosphothreonine modification is found at Thr33. Phosphoserine occurs at positions 58 and 64. Positions 116–300 (GIPHHFRAIV…RIMDVFLSEG (185 aa)) constitute a Rab-GAP TBC domain. Coiled coils occupy residues 352 to 463 (SIKL…ENNV), 494 to 583 (CLLE…ENQR), and 627 to 772 (REME…RGKF).

As to quaternary structure, interacts with Rab11.

It localises to the cytoplasm. The protein localises to the endosome. Functions as a GTPase-activating protein (GAP). During border cell migration in the ovary, acts as a GAP for Rab11 and is necessary for the maintenance of active receptor tyrosine kinases at the leading edge. This is Ecotropic viral integration site 5 ortholog (Evi5) from Drosophila melanogaster (Fruit fly).